We begin with the raw amino-acid sequence, 345 residues long: Probable 1-aminocyclopropane-1-carboxylate deaminase (345 aa).

An N6-(pyridoxal phosphate)lysine modification is found at K58. The Nucleophile role is filled by S85.

The protein belongs to the ACC deaminase/D-cysteine desulfhydrase family. Requires pyridoxal 5'-phosphate as cofactor.

It carries out the reaction 1-aminocyclopropane-1-carboxylate + H2O = 2-oxobutanoate + NH4(+). Catalyzes a cyclopropane ring-opening reaction, the irreversible conversion of 1-aminocyclopropane-1-carboxylate (ACC) to ammonia and alpha-ketobutyrate. This chain is Probable 1-aminocyclopropane-1-carboxylate deaminase, found in Cryptococcus neoformans var. neoformans serotype D (strain JEC21 / ATCC MYA-565) (Filobasidiella neoformans).